The sequence spans 473 residues: MNDYIRVNCTELRWPELVCAEPGSNSRGHSPPFHIANASITQLKAIDLLFLIDFSISKIMESLLQLETALRAVVEETKRPNAAAAFASLRRADPNNDPALTAVASRVVDLASEVTQLLEPAYLALADHLFGYQHTQCLAAVVELRIPDYLASGPQTFEQLSISSGTRRDRLRQVLRLLYNNGVFSYDAESDSVRNNEASEMLKQDHWTQWHRWASVCSKQFYQMAQGLPRAMSAGVTRSPAQVHYDTDESMFSYLERNGTMVQLRECMGAAAIAQTPGMITGYPWAELSNHTLFDLGGGDGSLIAGLLRAIPTLQGGIMDTPRVLPFLQEAFHHPSSKYADVALRIPPERVIAGDFLQEVIPSEAYVMRWCLHDWNDEQACQILRNIRRSIINSPVSRLIVLESVLADGRWGRMSRLGDINVMVTAEHGQERTETQWRQLAACTGWKVVSITQLPGAWPSAIDMRPVERPENV.

S-adenosyl-L-methionine contacts are provided by residues aspartate 320 and 354–356 (GDF). Histidine 373 acts as the Proton acceptor in catalysis.

This sequence belongs to the class I-like SAM-binding methyltransferase superfamily. Cation-independent O-methyltransferase family. COMT subfamily.

Its pathway is mycotoxin biosynthesis. Functionally, O-methyltransferase; part of the gene cluster that mediates the biosynthesis of aspirochlorine (or antibiotic A30641), an unusual halogenated spiro compound with distinctive antifungal properties due to selective inhibition of protein biosynthesis, and which is also active against bacteria, viruses, and murine tumor cells. The non-ribosomal peptide synthetase (NRPS) aclP is responsible the formation of the diketopiperazine (DKP) core from the condensation of 2 phenylalanine residues. One Phe residue is tailored into chlorotyrosine by hydroxylation and chlorination, whereas the second Phe undergoes an unprecedented C-C bond cleavage to be converted into glycine. After formation of the DKP, sulfur is incorporated into the DKP by conjugation with glutathione by aclG, followed by its stepwise degradation to the thiol by aclI, aclJ and aclK, and the dithiol oxidation by aclT. In addition, oxygenases (aclB, aclC, aclL and aclO) and O-methyltransferases (aclM and aclU) act as tailoring enzymes to produce the intermediate dechloroaspirochlorine. Ultimately, chlorination of dechloroaspirochlorine by the halogenase aclH is the last step in the aspirochlorine pathway. The polypeptide is O-methyltransferase aclU (Aspergillus oryzae (strain ATCC 42149 / RIB 40) (Yellow koji mold)).